We begin with the raw amino-acid sequence, 114 residues long: Large ribosomal subunit protein bL19 (114 aa).

Belongs to the bacterial ribosomal protein bL19 family.

Its function is as follows. This protein is located at the 30S-50S ribosomal subunit interface and may play a role in the structure and function of the aminoacyl-tRNA binding site. The chain is Large ribosomal subunit protein bL19 from Clavibacter sepedonicus (Clavibacter michiganensis subsp. sepedonicus).